We begin with the raw amino-acid sequence, 212 residues long: MDILGNIPSQYWIIVSNTFGNNTSFEFNYASLKEIYDIEIDYFNYVINHLVKETYDSGKILTTLKMLEQIYIKLYDYTKLNLYQESIDYVYIEIQRWFKMNSHDGNFSLETKQMELLKYIYGREQCKYAHELVEQAYVHLSNENGNNGLVASWITYANSYFGGFYKKNAFEIISEIHESQKNNIVNKLKQITVDEVKPLDEVYKKWMSLKIY.

It belongs to the mimivirus R683/R861 family.

This is an uncharacterized protein from Acanthamoeba polyphaga (Amoeba).